A 247-amino-acid chain; its full sequence is Flavin-dependent thymidylate synthase (247 aa).

The 237-residue stretch at 1 to 237 folds into the ThyX domain; that stretch reads MDVKLLEATD…PKTFEYYEQE (237 aa). DUMP is bound by residues 85–88, 98–100, and Arg176; these read QITR and SMR. Residue 88–90 coordinates FAD; sequence RHR. The ThyX motif signature appears at 88–98; that stretch reads RHRHVSFDVQS. Residues 192–194 and His198 each bind FAD; that span reads NAR. Arg203 contacts dUMP. The active-site Involved in ionization of N3 of dUMP, leading to its activation is Arg203.

Belongs to the thymidylate synthase ThyX family. In terms of assembly, homotetramer. The cofactor is FAD.

It catalyses the reaction dUMP + (6R)-5,10-methylene-5,6,7,8-tetrahydrofolate + NADPH + H(+) = dTMP + (6S)-5,6,7,8-tetrahydrofolate + NADP(+). It participates in pyrimidine metabolism; dTTP biosynthesis. Catalyzes the reductive methylation of 2'-deoxyuridine-5'-monophosphate (dUMP) to 2'-deoxythymidine-5'-monophosphate (dTMP) while utilizing 5,10-methylenetetrahydrofolate (mTHF) as the methyl donor, and NADPH and FADH(2) as the reductant. This chain is Flavin-dependent thymidylate synthase, found in Haloarcula marismortui (strain ATCC 43049 / DSM 3752 / JCM 8966 / VKM B-1809) (Halobacterium marismortui).